Here is a 332-residue protein sequence, read N- to C-terminus: Arrestin domain-containing protein 5 (332 aa).

The tract at residues 311–332 (SNQTAAGCRTRAPLPVSPDQQN) is disordered.

The protein belongs to the arrestin family.

It localises to the membrane. Its function is as follows. Plays an essential role in spermatogenesis. May be involved in the anchoring of the sperm head to the tail during spermatogenesis by affecting SEC22A-mediated SUN5 and NDC1 transport and localization. This chain is Arrestin domain-containing protein 5 (ARRDC5), found in Bos taurus (Bovine).